A 288-amino-acid chain; its full sequence is Elongation factor Ts (288 aa).

Residues 82–85 (TDFV) are involved in Mg(2+) ion dislocation from EF-Tu.

Belongs to the EF-Ts family.

It is found in the cytoplasm. In terms of biological role, associates with the EF-Tu.GDP complex and induces the exchange of GDP to GTP. It remains bound to the aminoacyl-tRNA.EF-Tu.GTP complex up to the GTP hydrolysis stage on the ribosome. This Chlorobium phaeobacteroides (strain BS1) protein is Elongation factor Ts.